Consider the following 578-residue polypeptide: Leucine-rich repeat-containing protein 15 (578 aa).

The N-terminal stretch at methionine 1–alanine 21 is a signal peptide. An LRRNT domain is found at tyrosine 22–tryptophan 53. At tyrosine 22 to glycine 535 the chain is on the extracellular side. LRR repeat units follow at residues asparagine 54–asparagine 75, alanine 78–asparagine 99, serine 102–aspartate 123, asparagine 126–glutamine 147, asparagine 150–histidine 171, glycine 174–histidine 195, asparagine 198–alanine 219, asparagine 222–asparagine 243, asparagine 246–glutamine 267, glutamine 270–proline 291, asparagine 294–histidine 315, glutamine 318–glycine 339, asparagine 342–serine 363, asparagine 366–asparagine 387, and glycine 390–histidine 411. N-linked (GlcNAc...) asparagine glycosylation occurs at asparagine 75. The N-linked (GlcNAc...) asparagine glycan is linked to asparagine 369. In terms of domain architecture, LRRCT spans asparagine 423–glycine 473. The disordered stretch occupies residues valine 476–serine 500. A helical membrane pass occupies residues leucine 536–isoleucine 556. Residues cysteine 557–cysteine 578 are Cytoplasmic-facing.

It is found in the cell membrane. This chain is Leucine-rich repeat-containing protein 15 (Lrrc15), found in Rattus norvegicus (Rat).